Here is a 119-residue protein sequence, read N- to C-terminus: Large ribosomal subunit protein uL24 (119 aa).

Belongs to the universal ribosomal protein uL24 family. Part of the 50S ribosomal subunit.

In terms of biological role, one of two assembly initiator proteins, it binds directly to the 5'-end of the 23S rRNA, where it nucleates assembly of the 50S subunit. One of the proteins that surrounds the polypeptide exit tunnel on the outside of the subunit. The protein is Large ribosomal subunit protein uL24 of Clavibacter michiganensis subsp. michiganensis (strain NCPPB 382).